A 216-amino-acid polypeptide reads, in one-letter code: Cytidylate kinase (216 aa).

Position 10 to 18 (Gly10 to Thr18) interacts with ATP.

The protein belongs to the cytidylate kinase family. Type 1 subfamily.

It is found in the cytoplasm. The enzyme catalyses CMP + ATP = CDP + ADP. It carries out the reaction dCMP + ATP = dCDP + ADP. The sequence is that of Cytidylate kinase from Clostridioides difficile (strain 630) (Peptoclostridium difficile).